Here is a 968-residue protein sequence, read N- to C-terminus: RNA polymerase-associated protein RapA (968 aa).

The Helicase ATP-binding domain occupies 164–334 (DVGRRHAPRV…FARLRLLDPS (171 aa)). 177–184 (DEVGLGKT) lines the ATP pocket. A DEAH box motif is present at residues 280–283 (DEAH). The Helicase C-terminal domain occupies 490–644 (RVEWLMGHLT…TCPTGRAIYD (155 aa)).

Belongs to the SNF2/RAD54 helicase family. RapA subfamily. As to quaternary structure, interacts with the RNAP. Has a higher affinity for the core RNAP than for the holoenzyme. Its ATPase activity is stimulated by binding to RNAP.

Its function is as follows. Transcription regulator that activates transcription by stimulating RNA polymerase (RNAP) recycling in case of stress conditions such as supercoiled DNA or high salt concentrations. Probably acts by releasing the RNAP, when it is trapped or immobilized on tightly supercoiled DNA. Does not activate transcription on linear DNA. Probably not involved in DNA repair. The chain is RNA polymerase-associated protein RapA from Citrobacter koseri (strain ATCC BAA-895 / CDC 4225-83 / SGSC4696).